The following is a 436-amino-acid chain: Glutamyl-tRNA reductase 2 (436 aa).

Residues 49–52, S106, 111–113, and Q117 each bind substrate; these read TCNR and EPQ. C50 (nucleophile) is an active-site residue. NADP(+) is bound at residue 186–191; the sequence is GAGKMC.

This sequence belongs to the glutamyl-tRNA reductase family. Homodimer.

It catalyses the reaction (S)-4-amino-5-oxopentanoate + tRNA(Glu) + NADP(+) = L-glutamyl-tRNA(Glu) + NADPH + H(+). Its pathway is porphyrin-containing compound metabolism; protoporphyrin-IX biosynthesis; 5-aminolevulinate from L-glutamyl-tRNA(Glu): step 1/2. In terms of biological role, catalyzes the NADPH-dependent reduction of glutamyl-tRNA(Glu) to glutamate 1-semialdehyde (GSA). The sequence is that of Glutamyl-tRNA reductase 2 from Koribacter versatilis (strain Ellin345).